The primary structure comprises 128 residues: Large ribosomal subunit protein bL12 (128 aa).

Belongs to the bacterial ribosomal protein bL12 family. In terms of assembly, homodimer. Part of the ribosomal stalk of the 50S ribosomal subunit. Forms a multimeric L10(L12)X complex, where L10 forms an elongated spine to which 2 to 4 L12 dimers bind in a sequential fashion. Binds GTP-bound translation factors.

In terms of biological role, forms part of the ribosomal stalk which helps the ribosome interact with GTP-bound translation factors. Is thus essential for accurate translation. This chain is Large ribosomal subunit protein bL12, found in Desulfovibrio desulfuricans (strain ATCC 27774 / DSM 6949 / MB).